A 484-amino-acid chain; its full sequence is Replication factor C large subunit (484 aa).

46 to 53 (GPPGSGKT) lines the ATP pocket. Basic and acidic residues-rich tracts occupy residues 419–432 (VKTE…KTKE), 442–451 (RISEPPEPLK), and 459–478 (KSVE…KKQA). Residues 419–484 (VKTETPKKKE…KKQATLDSFF (66 aa)) are disordered.

It belongs to the activator 1 small subunits family. RfcL subfamily. In terms of assembly, heteromultimer composed of small subunits (RfcS) and large subunits (RfcL).

Functionally, part of the RFC clamp loader complex which loads the PCNA sliding clamp onto DNA. The chain is Replication factor C large subunit from Methanococcus maripaludis (strain C5 / ATCC BAA-1333).